We begin with the raw amino-acid sequence, 220 residues long: PKHD-type hydroxylase sync_1544 (220 aa).

A Fe2OG dioxygenase domain is found at 79–173 (KLHRFLISKT…RTVCVGWIES (95 aa)). His97, Asp99, and His154 together coordinate Fe cation. Residue Arg164 participates in 2-oxoglutarate binding.

Fe(2+) serves as cofactor. Requires L-ascorbate as cofactor.

The polypeptide is PKHD-type hydroxylase sync_1544 (Synechococcus sp. (strain CC9311)).